Consider the following 216-residue polypeptide: 3-isopropylmalate dehydratase small subunit (216 aa).

It belongs to the LeuD family. LeuD type 1 subfamily. In terms of assembly, heterodimer of LeuC and LeuD.

It carries out the reaction (2R,3S)-3-isopropylmalate = (2S)-2-isopropylmalate. The protein operates within amino-acid biosynthesis; L-leucine biosynthesis; L-leucine from 3-methyl-2-oxobutanoate: step 2/4. Functionally, catalyzes the isomerization between 2-isopropylmalate and 3-isopropylmalate, via the formation of 2-isopropylmaleate. The protein is 3-isopropylmalate dehydratase small subunit of Marinomonas sp. (strain MWYL1).